A 1321-amino-acid polypeptide reads, in one-letter code: Multidrug resistance protein pgp-1 (1321 aa).

Topologically, residues 1-77 are cytoplasmic; the sequence is MLRNGSLRQS…YTTTLEKLLL (77 aa). In terms of domain architecture, ABC transmembrane type-1 1 spans 77 to 381; sequence LFIGTLVAVI…AGPQLAVLGT (305 aa). A helical membrane pass occupies residues 78-98; it reads FIGTLVAVITGAGLPLMSILQ. N-linked (GlcNAc...) asparagine glycosylation is found at Asn-115 and Asn-125. Residues 144-164 form a helical membrane-spanning segment; sequence AMTVGMWAAGQITVTCYLYVA. An N-linked (GlcNAc...) asparagine glycan is attached at Asn-190. 4 helical membrane passes run 213–233, 240–260, 321–341, and 350–370; these read KIGM…VAFT, LVML…AKSM, ISFG…FYIG, and LNFG…MALG. At 371–753 the chain is on the cytoplasmic side; it reads LAGPQLAVLG…LYHARPHALS (383 aa). The region spanning 416 to 652 is the ABC transporter 1 domain; that stretch reads ITVENVHFTY…QGLYYDLVTA (237 aa). 451–458 provides a ligand contact to ATP; the sequence is GSSGCGKS. 2 consecutive transmembrane segments (helical) span residues 754 to 774 and 798 to 818; these read LFIG…YSVF and LMFL…TFFM. Residues 754 to 1043 enclose the ABC transmembrane type-1 2 domain; the sequence is LFIGMSTATI…ATSYFPEYAK (290 aa). N-linked (GlcNAc...) asparagine glycosylation occurs at Asn-850. A run of 4 helical transmembrane segments spans residues 874-894, 895-915, 978-998, and 1017-1037; these read FSTV…AFFY, GWQM…GQYL, IQGL…TCAY, and VLRV…ATSY. Residues 1038–1321 lie on the Cytoplasmic side of the membrane; it reads FPEYAKATFA…LTQKQMTEKK (284 aa). The 239-residue stretch at 1077–1315 folds into the ABC transporter 2 domain; sequence VIFKNVRFAY…KGAYYKLTQK (239 aa). An ATP-binding site is contributed by 1112-1119; sequence GPSGCGKS.

It belongs to the ABC transporter superfamily. ABCB family. Multidrug resistance exporter (TC 3.A.1.201) subfamily. In terms of tissue distribution, intestinal cells.

The protein localises to the membrane. It carries out the reaction ATP + H2O + xenobioticSide 1 = ADP + phosphate + xenobioticSide 2.. Functionally, energy-dependent efflux pump responsible for decreased drug accumulation in multidrug-resistant cells. The protein is Multidrug resistance protein pgp-1 (pgp-1) of Caenorhabditis elegans.